The chain runs to 684 residues: uncharacterized protein (684 aa).

Disordered stretches follow at residues 267 to 353 (MGAR…TCTD) and 388 to 449 (SVAS…AERE). The span at 316 to 326 (GMTSAKASTSY) shows a compositional bias: polar residues. The segment covering 438-449 (RPTEARRRAERE) has biased composition (basic and acidic residues).

This is an uncharacterized protein from Colorado tick fever virus (strain USA/Florio N-7180) (CTFV).